Here is a 525-residue protein sequence, read N- to C-terminus: GMP synthase [glutamine-hydrolyzing] (525 aa).

Residues R9 to L207 form the Glutamine amidotransferase type-1 domain. Residue C86 is the Nucleophile of the active site. Catalysis depends on residues H181 and E183. Residues W208–R400 form the GMPS ATP-PPase domain. S235–S241 is a binding site for ATP.

As to quaternary structure, homodimer.

The catalysed reaction is XMP + L-glutamine + ATP + H2O = GMP + L-glutamate + AMP + diphosphate + 2 H(+). It functions in the pathway purine metabolism; GMP biosynthesis; GMP from XMP (L-Gln route): step 1/1. In terms of biological role, catalyzes the synthesis of GMP from XMP. In Pseudomonas putida (strain W619), this protein is GMP synthase [glutamine-hydrolyzing].